The sequence spans 213 residues: Phosphatidylcholine transfer protein (213 aa).

An N-acetylmethionine modification is found at methionine 1. Residues 1-212 (MDPGAGAFSE…MVKACQNYKK (212 aa)) form the START domain. A 1,2-diacyl-sn-glycero-3-phosphocholine contacts are provided by tyrosine 72 and arginine 78. Serine 139 bears the Phosphoserine mark. A 1,2-diacyl-sn-glycero-3-phosphocholine is bound at residue glutamine 157. A part of the binding site for phosphatidylcholine region spans residues 171–176 (VFMYYF).

In terms of assembly, interacts with ACOT13/THEM2.

The protein localises to the cytoplasm. Functionally, catalyzes the transfer of phosphatidylcholine between membranes. Binds phosphatidylcholine in a tight 1:1 stoichiometric complex. This chain is Phosphatidylcholine transfer protein (PCTP), found in Bos taurus (Bovine).